Reading from the N-terminus, the 276-residue chain is Putative pyridoxine kinase (276 aa).

Asparagine 139 is an ATP binding site. A Mg(2+)-binding site is contributed by glutamate 142. ATP-binding positions include 176–180, aspartate 188, glycine 213, and lysine 238; that span reads KGGKA.

It belongs to the ThiD family.

It carries out the reaction pyridoxal + ATP = pyridoxal 5'-phosphate + ADP + H(+). In terms of biological role, phosphorylates B6 vitamers; functions in a salvage pathway. Uses pyridoxal, pyridoxine, and pyridoxamine as substrates. The polypeptide is Putative pyridoxine kinase (pdxK) (Staphylococcus aureus (strain COL)).